Reading from the N-terminus, the 318-residue chain is Transaldolase (318 aa).

The active-site Schiff-base intermediate with substrate is the lysine 132.

It belongs to the transaldolase family. Type 1 subfamily. As to quaternary structure, homodimer.

It is found in the cytoplasm. The catalysed reaction is D-sedoheptulose 7-phosphate + D-glyceraldehyde 3-phosphate = D-erythrose 4-phosphate + beta-D-fructose 6-phosphate. The protein operates within carbohydrate degradation; pentose phosphate pathway; D-glyceraldehyde 3-phosphate and beta-D-fructose 6-phosphate from D-ribose 5-phosphate and D-xylulose 5-phosphate (non-oxidative stage): step 2/3. In terms of biological role, transaldolase is important for the balance of metabolites in the pentose-phosphate pathway. The polypeptide is Transaldolase (Hamiltonella defensa subsp. Acyrthosiphon pisum (strain 5AT)).